The chain runs to 509 residues: Maturase K (509 aa).

The protein belongs to the intron maturase 2 family. MatK subfamily.

The protein resides in the plastid. Its subcellular location is the chloroplast. Its function is as follows. Usually encoded in the trnK tRNA gene intron. Probably assists in splicing its own and other chloroplast group II introns. The chain is Maturase K from Anthocercis viscosa (Sticky tailflower).